The chain runs to 680 residues: Putative cyclin-dependent serine/threonine-protein kinase DDB_G0272797/DDB_G0274007 (680 aa).

The 378-residue stretch at 4-381 folds into the Protein kinase domain; it reads YIILSKCGQG…SLEALEHPWF (378 aa). Residues 10–18 and Lys-33 each bind ATP; that span reads CGQGTYGSV. The active-site Proton acceptor is Asp-125. 4 disordered regions span residues 243 to 299, 409 to 444, 483 to 507, and 597 to 680; these read QQQQ…LQSP, RQLQ…QRQH, LAQH…QHQQ, and QQQQ…KSNG. Positions 257 to 286 are enriched in low complexity; that stretch reads NNNNNNNNNNNNNNNNNNNNNNNNNNNNNN. Positions 287 to 297 are enriched in polar residues; the sequence is KYNNISTSCLQ. Composition is skewed to low complexity over residues 410-444, 483-494, and 597-616; these read QLQQ…QRQH, LAQHQQYNSQQH, and QQQQ…PPQH. Positions 617 to 631 are enriched in basic residues; it reads QHQHQHQHQHQHQHQ. Residues 632–642 show a composition bias toward low complexity; sequence HQPQPQHQHQP. The span at 643 to 655 shows a compositional bias: pro residues; sequence QPQPQPTPTPTPT. Residues 656-680 are compositionally biased toward low complexity; that stretch reads STPTTTTIPPTITTTIQPTISKSNG.

Belongs to the protein kinase superfamily. CMGC Ser/Thr protein kinase family. CDC2/CDKX subfamily.

It carries out the reaction L-seryl-[protein] + ATP = O-phospho-L-seryl-[protein] + ADP + H(+). It catalyses the reaction L-threonyl-[protein] + ATP = O-phospho-L-threonyl-[protein] + ADP + H(+). The sequence is that of Putative cyclin-dependent serine/threonine-protein kinase DDB_G0272797/DDB_G0274007 from Dictyostelium discoideum (Social amoeba).